A 160-amino-acid chain; its full sequence is MPHSYGIRARTRYTFQRGFREHGQIRLSTYLKTYKVGDIVDIKVNGAVQKGMPHKYYHGKTGVVYNVTQSSVGVLIYKVVGNRYMEKRVNVRIEHVKHSKCRQDFLDRVKANEAKRKEAKAQGKTVQLRRQPAPPAKAHFVSTENNEPVTLHPVAYDTTI.

The tract at residues 114-138 is disordered; the sequence is AKRKEAKAQGKTVQLRRQPAPPAKA.

Belongs to the eukaryotic ribosomal protein eL21 family. As to quaternary structure, component of the large ribosomal subunit (LSU). Mature yeast ribosomes consist of a small (40S) and a large (60S) subunit. The 40S small subunit contains 1 molecule of ribosomal RNA (18S rRNA) and at least 33 different proteins. The large 60S subunit contains 3 rRNA molecules (25S, 5.8S and 5S rRNA) and at least 46 different proteins.

The protein localises to the cytoplasm. Component of the ribosome, a large ribonucleoprotein complex responsible for the synthesis of proteins in the cell. The small ribosomal subunit (SSU) binds messenger RNAs (mRNAs) and translates the encoded message by selecting cognate aminoacyl-transfer RNA (tRNA) molecules. The large subunit (LSU) contains the ribosomal catalytic site termed the peptidyl transferase center (PTC), which catalyzes the formation of peptide bonds, thereby polymerizing the amino acids delivered by tRNAs into a polypeptide chain. The nascent polypeptides leave the ribosome through a tunnel in the LSU and interact with protein factors that function in enzymatic processing, targeting, and the membrane insertion of nascent chains at the exit of the ribosomal tunnel. This Schizosaccharomyces pombe (strain 972 / ATCC 24843) (Fission yeast) protein is Large ribosomal subunit protein eL21A (rpl2101).